The sequence spans 513 residues: Probable vesicular acetylcholine transporter-A (513 aa).

At 1–39 the chain is on the cytoplasmic side; it reads MATEESGGLAQTAAVKLSEMGERTKQLGNAIQDPERQRR. Residues 40–60 traverse the membrane as a helical segment; that stretch reads IILVIVCVALLLDNMLYMVIV. Residues 61 to 98 are Lumenal, vesicle-facing; that stretch reads PIVPDYLAHLESESEQAHVKGNSSINITQNENFDLQIG. N-linked (GlcNAc...) asparagine glycosylation is found at Asn82 and Asn86. A helical membrane pass occupies residues 99 to 119; that stretch reads VLFASKAILQLLVNPLTGTFI. At 120–125 the chain is on the cytoplasmic side; the sequence is DRVGYD. Residues 126-146 form a helical membrane-spanning segment; the sequence is IPLLIGLSIMFVSTCIFAFAE. At 147 to 156 the chain is on the lumenal, vesicle side; the sequence is NYATLFMARS. The chain crosses the membrane as a helical span at residues 157–174; sequence LQGLGSAFADTSGIAMIA. The Cytoplasmic segment spans residues 175–186; the sequence is DKYAEESERSRA. A helical membrane pass occupies residues 187 to 207; the sequence is LGIALAFISFGSLAAPPFGGV. The Lumenal, vesicle segment spans residues 208–215; sequence LYEFAGKR. A helical transmembrane segment spans residues 216 to 236; the sequence is FPFIALACVCLADGILCLTVL. Over 237–257 the chain is Cytoplasmic; that stretch reads KPFSSRTRENMPVGTPIYKLM. Residues 258–278 traverse the membrane as a helical segment; that stretch reads IDPYIAVVAGALTTCNIPLAF. At 279–296 the chain is on the lumenal, vesicle side; the sequence is LEPTIANWMEETMNASQW. Asn292 is a glycosylation site (N-linked (GlcNAc...) asparagine). The helical transmembrane segment at 297-317 threads the bilayer; that stretch reads QIGITWLPAFFPHILGVYLTV. Residues 318 to 327 lie on the Cytoplasmic side of the membrane; sequence KLAAKYPHLQ. Residues 328-348 traverse the membrane as a helical segment; the sequence is WFYGALGMVIIGASSCIVPAC. The Lumenal, vesicle portion of the chain corresponds to 349–353; that stretch reads KNFEQ. The helical transmembrane segment at 354–374 threads the bilayer; it reads LIIPLCGVCFGIALVDTALLP. Residues 375–390 lie on the Cytoplasmic side of the membrane; that stretch reads TLAFLVDVRHVSVYGS. Residues 391 to 411 traverse the membrane as a helical segment; that stretch reads VYAIADISYCVAYALGPIVAG. The Lumenal, vesicle portion of the chain corresponds to 412–418; sequence KIVHDLG. A helical transmembrane segment spans residues 419–439; that stretch reads FVQLNLGMGLANVLYAPALLL. The Cytoplasmic portion of the chain corresponds to 440-513; sequence LRNVSLMKPS…EEETSEPEYI (74 aa). The disordered stretch occupies residues 475–513; that stretch reads RKKHGYSSSGNCVPIDENGTFAGQSKSFSEEETSEPEYI. A compositionally biased stretch (acidic residues) spans 504-513; it reads EEETSEPEYI.

The protein belongs to the major facilitator superfamily. Vesicular transporter family.

It is found in the membrane. Functionally, involved in acetylcholine transport into synaptic vesicles. This Danio rerio (Zebrafish) protein is Probable vesicular acetylcholine transporter-A.